Consider the following 510-residue polypeptide: 2,3-bisphosphoglycerate-independent phosphoglycerate mutase (510 aa).

Residues D13 and S63 each contribute to the Mn(2+) site. S63 functions as the Phosphoserine intermediate in the catalytic mechanism. Residues H124, R154 to D155, R186, R192, R262 to R265, and K334 contribute to the substrate site. Residues D401, H405, D442, H443, and H461 each contribute to the Mn(2+) site.

It belongs to the BPG-independent phosphoglycerate mutase family. In terms of assembly, monomer. The cofactor is Mn(2+).

The catalysed reaction is (2R)-2-phosphoglycerate = (2R)-3-phosphoglycerate. It participates in carbohydrate degradation; glycolysis; pyruvate from D-glyceraldehyde 3-phosphate: step 3/5. In terms of biological role, catalyzes the interconversion of 2-phosphoglycerate and 3-phosphoglycerate. This Aliivibrio fischeri (strain MJ11) (Vibrio fischeri) protein is 2,3-bisphosphoglycerate-independent phosphoglycerate mutase.